The chain runs to 338 residues: Transferrin receptor subunit ESAG7 (338 aa).

An N-terminal signal peptide occupies residues 1 to 17 (MRFWFVLLALLGKEIYA). Residues asparagine 26 and asparagine 110 are each glycosylated (N-linked (GlcNAc...) asparagine). Disulfide bonds link cysteine 34–cysteine 161, cysteine 84–cysteine 311, cysteine 144–cysteine 215, and cysteine 230–cysteine 247. Asparagine 234 is a glycosylation site (N-linked (GlcNAc...) asparagine).

Heterodimer composed of ESAG6 and ESAG7. N-glycosylated. Glycosylation is dispensable for heterodimer formation and host transferrin binding.

The protein localises to the cell membrane. Its subcellular location is the flagellar pocket. In terms of biological role, transferrin receptor subunit involved in receptor-mediated acquisition of iron from the environment by binding host TF/transferrin. In Trypanosoma brucei brucei, this protein is Transferrin receptor subunit ESAG7.